A 352-amino-acid chain; its full sequence is MNAPIDERDFLTDSYDYALPERCIAQQPAEPRDHSRLLVVDGEAHTHRYFYDLPGLLRPGDLLVLNDTRVIPARLFGSKASGGRVEVLLLEPRAPREWLCLVKPARRLAVGARIDFDGVLAARVTELDAETGGRWLRFEGEEDFEAALERVGHTPLPPYLKTGRTRDERYQTLWASRPGAVAAPTAGLHFSGELLARLAERGIERATVTLHVGLGTFRPVQSVSVHTHRMHREWYEIPEATAIAIERTRSRGGRVLAVGTTSARALESAAQPNGLPATGPGRSELFVYPGYRWRVVEGLITNFHLPRSSLLMLVSSLVGRERLLALYREAVDKGYRFYSFGDAMLILPGAGA.

It belongs to the QueA family. In terms of assembly, monomer.

The protein resides in the cytoplasm. It carries out the reaction 7-aminomethyl-7-carbaguanosine(34) in tRNA + S-adenosyl-L-methionine = epoxyqueuosine(34) in tRNA + adenine + L-methionine + 2 H(+). The protein operates within tRNA modification; tRNA-queuosine biosynthesis. In terms of biological role, transfers and isomerizes the ribose moiety from AdoMet to the 7-aminomethyl group of 7-deazaguanine (preQ1-tRNA) to give epoxyqueuosine (oQ-tRNA). The polypeptide is S-adenosylmethionine:tRNA ribosyltransferase-isomerase (Gloeobacter violaceus (strain ATCC 29082 / PCC 7421)).